A 623-amino-acid chain; its full sequence is Sodium-coupled monocarboxylate transporter 2 (623 aa).

Residues 1-10 (METVGRFQAG) are Extracellular-facing. Residues 11-31 (DYVVFACLFVVSSGIGVFFAI) traverse the membrane as a helical segment. Residues 32–50 (KERNKAPSKEFLVGGRQMS) are Cytoplasmic-facing. Residues 51 to 71 (CGPVALSLTASFMSAVTVIGA) traverse the membrane as a helical segment. The Extracellular portion of the chain corresponds to 72-83 (PADVYRFGASYV). The chain crosses the membrane as a helical span at residues 84–104 (IFGVAYTFVVFFTAELFLPVF). Topologically, residues 105-129 (YRSGITSTYEYLELRFCKLVRVAAT) are cytoplasmic. A helical transmembrane segment spans residues 130-150 (LIYIIQTILYTGVVVYAPALA). Over 151–158 (LNQVTGFD) the chain is Extracellular. Residues 159–179 (LWGSIFATGIVCTFYCTLGGL) form a helical membrane-spanning segment. Residues 180–181 (KA) lie on the Cytoplasmic side of the membrane. A helical membrane pass occupies residues 182–202 (VVWTDAFQMVVMVVGFLTVLI). At 203–236 (QGSSRAGGIENVWSTSRTGGRLQVFDFDVSPLRR) the chain is on the extracellular side. A helical membrane pass occupies residues 237–257 (HTFWTLSVGGTFTWLGIYGVN). The Cytoplasmic portion of the chain corresponds to 258–276 (QSTIQRCISCKTEGHARWA). The chain crosses the membrane as a helical span at residues 277–297 (LYLNLLGLWIILFCAVVSGLI). At 298–322 (MYSYYSHCDPWSSGLISAPDQLMPY) the chain is on the extracellular side. A helical membrane pass occupies residues 323–343 (FVMEILGAFPGLPGLFVACAF). Over 344 to 386 (SGTLSTVAASINALATVMYEDFVSQCFPDLSNRAASWISKALC) the chain is Cytoplasmic. The helical transmembrane segment at 387-407 (VAFGVACTTMAVAASYMGGIV) threads the bilayer. Over 408–412 (QAALS) the chain is Extracellular. The chain crosses the membrane as a helical span at residues 413–433 (IHGMCGGPVLGLFSLGILFPF). The Cytoplasmic portion of the chain corresponds to 434 to 438 (TNLKG). Residues 439 to 459 (AVGGLIVGISLSFWVGVGAFI) form a helical membrane-spanning segment. Over 460 to 510 (YPAPSNNTHALELNTAGCNITAAAFEPTSATVTQLTSDRNWLADSWYSMSY) the chain is Extracellular. Asparagine 465 and asparagine 478 each carry an N-linked (GlcNAc...) asparagine glycan. A helical membrane pass occupies residues 511–531 (LYYSAVGFIGTVAAGLLITLL). Topologically, residues 532–623 (TGPMDPKLLK…NETSIVQKKL (92 aa)) are cytoplasmic.

Belongs to the sodium:solute symporter (SSF) (TC 2.A.21) family.

It is found in the apical cell membrane. It carries out the reaction (S)-lactate(out) + Na(+)(out) = (S)-lactate(in) + Na(+)(in). The enzyme catalyses nicotinate(out) + Na(+)(out) = nicotinate(in) + Na(+)(in). The catalysed reaction is pyruvate(out) + Na(+)(out) = pyruvate(in) + Na(+)(in). It catalyses the reaction propanoate(out) + Na(+)(out) = propanoate(in) + Na(+)(in). It carries out the reaction butanoate(out) + Na(+)(out) = butanoate(in) + Na(+)(in). The enzyme catalyses acetoacetate(out) + Na(+)(out) = acetoacetate(in) + Na(+)(in). In terms of biological role, acts as an electroneutral and low-affinity sodium (Na(+))-dependent sodium-coupled solute transporter. Catalyzes the transport across the plasma membrane of many monocarboxylates such as lactate, pyruvate, nicotinate, propionate, butyrate and beta-D-hydroxybutyrate. The protein is Sodium-coupled monocarboxylate transporter 2 (slc5a12) of Danio rerio (Zebrafish).